A 369-amino-acid polypeptide reads, in one-letter code: Queuine tRNA-ribosyltransferase (369 aa).

Aspartate 89 acts as the Proton acceptor in catalysis. Residues 89-93 (DSGGF), aspartate 142, glutamine 184, and glycine 211 each bind substrate. The segment at 242 to 248 (GGGSPEL) is RNA binding. The active-site Nucleophile is the aspartate 261. Positions 266–270 (TRIAR) are RNA binding; important for wobble base 34 recognition. Residues cysteine 299, cysteine 301, cysteine 304, and histidine 330 each contribute to the Zn(2+) site.

It belongs to the queuine tRNA-ribosyltransferase family. In terms of assembly, homodimer. Within each dimer, one monomer is responsible for RNA recognition and catalysis, while the other monomer binds to the replacement base PreQ1. The cofactor is Zn(2+).

It catalyses the reaction 7-aminomethyl-7-carbaguanine + guanosine(34) in tRNA = 7-aminomethyl-7-carbaguanosine(34) in tRNA + guanine. It functions in the pathway tRNA modification; tRNA-queuosine biosynthesis. Its function is as follows. Catalyzes the base-exchange of a guanine (G) residue with the queuine precursor 7-aminomethyl-7-deazaguanine (PreQ1) at position 34 (anticodon wobble position) in tRNAs with GU(N) anticodons (tRNA-Asp, -Asn, -His and -Tyr). Catalysis occurs through a double-displacement mechanism. The nucleophile active site attacks the C1' of nucleotide 34 to detach the guanine base from the RNA, forming a covalent enzyme-RNA intermediate. The proton acceptor active site deprotonates the incoming PreQ1, allowing a nucleophilic attack on the C1' of the ribose to form the product. After dissociation, two additional enzymatic reactions on the tRNA convert PreQ1 to queuine (Q), resulting in the hypermodified nucleoside queuosine (7-(((4,5-cis-dihydroxy-2-cyclopenten-1-yl)amino)methyl)-7-deazaguanosine). The protein is Queuine tRNA-ribosyltransferase of Thermotoga sp. (strain RQ2).